We begin with the raw amino-acid sequence, 383 residues long: MKNNLPPFIEIYRALIATPSISATEEALDQSNESLINLLAGWFRDLGFNVEVQPVPDTRHKFNLLASTGHGAGGLLLAGHTDTVPFDDGRWTRDPFTLTEHDNKLYGLGTADMKGFFAFILDALRDVDVTTLKKPLYILATADEETSMAGARYFAETTQLRPDCAIIGEPTSLQPIRAHKGHMSNAIRIQGQSGHSSDPARGVNAIELMHDAIGRIMQLRDLLKERYHFEAFTVPYPTLNLGAIHGGDASNRICACCELHMDIRPLPGMTLNDLNGLLGEALAPVSERWPGRLTVSELHPPIPGYECPPDHKLVQVVEKLLGAQTDVVNYCTEAPFIQTLCPTLVLGPGSINQAHQPDEYLETRFIKPTRELISQVVHHFCWH.

His-80 serves as a coordination point for Zn(2+). Asp-82 is an active-site residue. Zn(2+) is bound at residue Asp-112. Residue Glu-144 is part of the active site. Positions 145, 169, and 355 each coordinate Zn(2+).

Belongs to the peptidase M20A family. ArgE subfamily. Homodimer. The cofactor is Zn(2+). It depends on Co(2+) as a cofactor. Glutathione serves as cofactor.

It is found in the cytoplasm. It catalyses the reaction N(2)-acetyl-L-ornithine + H2O = L-ornithine + acetate. It functions in the pathway amino-acid biosynthesis; L-arginine biosynthesis; L-ornithine from N(2)-acetyl-L-ornithine (linear): step 1/1. In terms of biological role, catalyzes the hydrolysis of the amide bond of N(2)-acetylated L-amino acids. Cleaves the acetyl group from N-acetyl-L-ornithine to form L-ornithine, an intermediate in L-arginine biosynthesis pathway, and a branchpoint in the synthesis of polyamines. This chain is Acetylornithine deacetylase, found in Klebsiella pneumoniae (strain 342).